The primary structure comprises 778 residues: Probable glutamine--tRNA ligase (778 aa).

Basic and acidic residues predominate over residues 188–205; sequence LKPQTKANDKPKAAKPKA. Residues 188–219 form a disordered region; the sequence is LKPQTKANDKPKAAKPKAEVTPAAQTAEAASD. A 'HIGH' region motif is present at residues 273-283; that stretch reads PEPNGILHIGH. ATP is bound by residues 274–276 and 280–286; these read EPN and HIGHAKA. L-glutamine is bound by residues aspartate 306 and tyrosine 441. Residues threonine 460, 489–490, and 497–499 contribute to the ATP site; these read RL and VSK. A 'KMSKS' region motif is present at residues 496 to 500; sequence LVSKR.

The protein belongs to the class-I aminoacyl-tRNA synthetase family.

It catalyses the reaction tRNA(Gln) + L-glutamine + ATP = L-glutaminyl-tRNA(Gln) + AMP + diphosphate. The protein is Probable glutamine--tRNA ligase of Drosophila melanogaster (Fruit fly).